Consider the following 84-residue polypeptide: Cytochrome b559 subunit alpha (84 aa).

Residues 22-36 traverse the membrane as a helical segment; the sequence is IIHSITIPALFVAGW. Position 24 (His24) interacts with heme.

This sequence belongs to the PsbE/PsbF family. As to quaternary structure, heterodimer of an alpha subunit and a beta subunit. PSII is composed of 1 copy each of membrane proteins PsbA, PsbB, PsbC, PsbD, PsbE, PsbF, PsbH, PsbI, PsbJ, PsbK, PsbL, PsbM, PsbT, PsbX, PsbY, PsbZ, Psb30/Ycf12, at least 3 peripheral proteins of the oxygen-evolving complex and a large number of cofactors. It forms dimeric complexes. The cofactor is heme b.

It localises to the plastid. It is found in the chloroplast thylakoid membrane. This b-type cytochrome is tightly associated with the reaction center of photosystem II (PSII). PSII is a light-driven water:plastoquinone oxidoreductase that uses light energy to abstract electrons from H(2)O, generating O(2) and a proton gradient subsequently used for ATP formation. It consists of a core antenna complex that captures photons, and an electron transfer chain that converts photonic excitation into a charge separation. The polypeptide is Cytochrome b559 subunit alpha (Guillardia theta (Cryptophyte)).